Consider the following 374-residue polypeptide: DNA integrity scanning protein DisA (374 aa).

Residues 20-158 (DGLMRASLSA…DGMRRVLEDS (139 aa)) enclose the DAC domain. ATP-binding positions include Gly87, Leu105, and 118 to 122 (TRHRT).

The protein belongs to the DisA family. Homooctamer. The cofactor is Mg(2+).

It carries out the reaction 2 ATP = 3',3'-c-di-AMP + 2 diphosphate. Its function is as follows. Participates in a DNA-damage check-point that is active prior to asymmetric division when DNA is damaged. DisA forms globular foci that rapidly scan along the chromosomes during sporulation, searching for lesions. When a lesion is present, DisA pauses at the lesion site. This triggers a cellular response that culminates in a temporary block in sporulation initiation. In terms of biological role, also has diadenylate cyclase activity, catalyzing the condensation of 2 ATP molecules into cyclic di-AMP (c-di-AMP). c-di-AMP acts as a signaling molecule that couples DNA integrity with progression of sporulation. The rise in c-di-AMP level generated by DisA while scanning the chromosome, operates as a positive signal that advances sporulation; upon encountering a lesion, the DisA focus arrests at the damaged site and halts c-di-AMP synthesis. The chain is DNA integrity scanning protein DisA from Streptomyces avermitilis (strain ATCC 31267 / DSM 46492 / JCM 5070 / NBRC 14893 / NCIMB 12804 / NRRL 8165 / MA-4680).